Reading from the N-terminus, the 405-residue chain is Amino sugar nitrososynthase DnmZ (405 aa).

Residues E117 and R332 each contribute to the dTDP site.

The protein belongs to the acyl-CoA dehydrogenase family. As to quaternary structure, homotetramer. FAD is required as a cofactor.

Its pathway is antibiotic biosynthesis. Its function is as follows. Nitrososynthase involved in the biosynthesis of baumycin. Catalyzes the double-oxidation of TDP-L-epi-vancosamine to TDP-L-epi-vancosonitrose. The rapid turnover of TDP-L-epi-vancosamine suggests that this compound, or a closely related analog, is the natural substrate for DnmZ. Can also catalyze the double-oxidation of TDP-L-evernosamine to TDP-L-evernitrosose. The protein is Amino sugar nitrososynthase DnmZ of Streptomyces peucetius.